Here is a 399-residue protein sequence, read N- to C-terminus: Probable tRNA sulfurtransferase (399 aa).

A THUMP domain is found at 60–165; sequence YAVMERLKRV…TEGTYISCET (106 aa). Residues 183-184, 208-209, R265, G287, and Q296 each bind ATP; these read LL and HF.

It belongs to the ThiI family.

It localises to the cytoplasm. It carries out the reaction [ThiI sulfur-carrier protein]-S-sulfanyl-L-cysteine + a uridine in tRNA + 2 reduced [2Fe-2S]-[ferredoxin] + ATP + H(+) = [ThiI sulfur-carrier protein]-L-cysteine + a 4-thiouridine in tRNA + 2 oxidized [2Fe-2S]-[ferredoxin] + AMP + diphosphate. The enzyme catalyses [ThiS sulfur-carrier protein]-C-terminal Gly-Gly-AMP + S-sulfanyl-L-cysteinyl-[cysteine desulfurase] + AH2 = [ThiS sulfur-carrier protein]-C-terminal-Gly-aminoethanethioate + L-cysteinyl-[cysteine desulfurase] + A + AMP + 2 H(+). It participates in cofactor biosynthesis; thiamine diphosphate biosynthesis. Functionally, catalyzes the ATP-dependent transfer of a sulfur to tRNA to produce 4-thiouridine in position 8 of tRNAs, which functions as a near-UV photosensor. Also catalyzes the transfer of sulfur to the sulfur carrier protein ThiS, forming ThiS-thiocarboxylate. This is a step in the synthesis of thiazole, in the thiamine biosynthesis pathway. The sulfur is donated as persulfide by IscS. The protein is Probable tRNA sulfurtransferase of Brevibacillus brevis (strain 47 / JCM 6285 / NBRC 100599).